A 213-amino-acid chain; its full sequence is Thiopurine S-methyltransferase (213 aa).

Residues W10, L46, E67, and R124 each contribute to the S-adenosyl-L-methionine site.

It belongs to the class I-like SAM-binding methyltransferase superfamily. TPMT family.

It localises to the cytoplasm. The catalysed reaction is S-adenosyl-L-methionine + a thiopurine = S-adenosyl-L-homocysteine + a thiopurine S-methylether.. The protein is Thiopurine S-methyltransferase of Xanthobacter autotrophicus (strain ATCC BAA-1158 / Py2).